The sequence spans 429 residues: Gamma-glutamyl phosphate reductase (429 aa).

Belongs to the gamma-glutamyl phosphate reductase family.

The protein resides in the cytoplasm. It catalyses the reaction L-glutamate 5-semialdehyde + phosphate + NADP(+) = L-glutamyl 5-phosphate + NADPH + H(+). Its pathway is amino-acid biosynthesis; L-proline biosynthesis; L-glutamate 5-semialdehyde from L-glutamate: step 2/2. Catalyzes the NADPH-dependent reduction of L-glutamate 5-phosphate into L-glutamate 5-semialdehyde and phosphate. The product spontaneously undergoes cyclization to form 1-pyrroline-5-carboxylate. The polypeptide is Gamma-glutamyl phosphate reductase (Bradyrhizobium sp. (strain BTAi1 / ATCC BAA-1182)).